A 195-amino-acid chain; its full sequence is Dephospho-CoA kinase (195 aa).

Positions isoleucine 3–histidine 195 constitute a DPCK domain. ATP is bound at residue glycine 11–alanine 16.

The protein belongs to the CoaE family.

The protein resides in the cytoplasm. The catalysed reaction is 3'-dephospho-CoA + ATP = ADP + CoA + H(+). Its pathway is cofactor biosynthesis; coenzyme A biosynthesis; CoA from (R)-pantothenate: step 5/5. Catalyzes the phosphorylation of the 3'-hydroxyl group of dephosphocoenzyme A to form coenzyme A. The chain is Dephospho-CoA kinase from Acinetobacter baylyi (strain ATCC 33305 / BD413 / ADP1).